We begin with the raw amino-acid sequence, 425 residues long: MSETTSILIKDTTILSDKIKKASILIVDNTIEEISNDLSVTDASKVIDGTNKITMPGLVNTHSHVAMTLLRGVGDDEELQTWLNDYIWPKEAKLDEKLVYAGSKLAMAEMIKTGTTTFNDMYFYMEETAKAVEESGIRGVLGYGMIDLFDDEKRKQEIKATKNLIKNSHNTANGRVQVAVAPHAPYTCSKELLSESKKLANKHNLKLHIHVSETQQEVNDLEKQRNQTPFEYLDSIDLLDENTIAAHGVWTTDNEMKLLKEKQVSISHNPSSNMKLASGIAPVSKYIKNDINVAIGTDGVSSNNNLDMFSEMKLTALLQKVNTMNAKTLPAQATFNMATENGARALGINTGSIKEGKLADIVLVNMNVPHMIPVRNPLSNIIYSALGSDVDTVICDGQLLLEDKKLLTINEEDAIYDAKLAAQQL.

His62 and His64 together coordinate Zn(2+). Substrate is bound by residues Glu91 and His183. His210 contacts Zn(2+). The substrate site is built by Glu213 and Asp298. Zn(2+) is bound at residue Asp298.

The protein belongs to the metallo-dependent hydrolases superfamily. MTA/SAH deaminase family. As to quaternary structure, homotetramer. Requires Zn(2+) as cofactor.

The catalysed reaction is 5'-deoxyadenosine + H2O + H(+) = 5'-deoxyinosine + NH4(+). It catalyses the reaction S-adenosyl-L-homocysteine + H2O + H(+) = S-inosyl-L-homocysteine + NH4(+). The enzyme catalyses S-methyl-5'-thioadenosine + H2O + H(+) = S-methyl-5'-thioinosine + NH4(+). It carries out the reaction adenosine + H2O + H(+) = inosine + NH4(+). Its pathway is amino-acid biosynthesis; S-adenosyl-L-methionine biosynthesis. Its function is as follows. Catalyzes the deamination of three SAM-derived enzymatic products, namely 5'-deoxyadenosine, S-adenosyl-L-homocysteine, and 5'-methylthioadenosine, to produce the inosine analogs. Can also deaminate adenosine. The preferred substrate for this enzyme is 5'-deoxyadenosine, but all these substrates are efficiently deaminated. Likely functions in a S-adenosyl-L-methionine (SAM) recycling pathway from S-adenosyl-L-homocysteine (SAH) produced from SAM-dependent methylation reactions. May also be involved in the recycling of 5'-deoxyadenosine, whereupon the 5'-deoxyribose moiety of 5'-deoxyinosine is further metabolized to deoxyhexoses used for the biosynthesis of aromatic amino acids in methanogens. In Methanosphaera stadtmanae (strain ATCC 43021 / DSM 3091 / JCM 11832 / MCB-3), this protein is 5'-deoxyadenosine deaminase.